The following is a 96-amino-acid chain: Co-chaperonin GroES (96 aa).

This sequence belongs to the GroES chaperonin family. In terms of assembly, heptamer of 7 subunits arranged in a ring. Interacts with the chaperonin GroEL.

It localises to the cytoplasm. Together with the chaperonin GroEL, plays an essential role in assisting protein folding. The GroEL-GroES system forms a nano-cage that allows encapsulation of the non-native substrate proteins and provides a physical environment optimized to promote and accelerate protein folding. GroES binds to the apical surface of the GroEL ring, thereby capping the opening of the GroEL channel. This chain is Co-chaperonin GroES, found in Shewanella loihica (strain ATCC BAA-1088 / PV-4).